The primary structure comprises 354 residues: MALVHYMNVSRSTFPLSRSSKINLSSSFASLPLQFHKNIKRLESSVPPSASASASPAFPIDVEYLRREFSGHGATFEDIGETCIARLKLDNGSSANVMLTRGMITSYKVRVWHGGKVELLHTWVEQEEEEVVIRGGVSSAFRSSDSDEISDWRLQGISGDSKDCVQMELRRSDKKIKEIELKQIISLRENTLSIELSMTNKGISPIKLEGCSLVSYLTVSTPEATYAVGLEGSDFVETTPFLPRFGVVQGEKEEEKPGFGGEEESNYKQLNREMSRIYTCAPKSFTVIDRGRRNSVVVGREGFEEVYMYSPGSRLESYTKSAYVCIGPSSLLSPISLESGCVWRGVLHLHNPNS.

The transit peptide at 1 to 49 directs the protein to the chloroplast; that stretch reads MALVHYMNVSRSTFPLSRSSKINLSSSFASLPLQFHKNIKRLESSVPPS.

The protein localises to the plastid. Its subcellular location is the chloroplast thylakoid membrane. Functionally, required for both formation and activity of the chloroplast NAD(P)H dehydrogenase (NDH) complex of the photosynthetic electron transport chain. May function in assembly or stabilization of the NDH complex. The chain is Protein NDH-DEPENDENT CYCLIC ELECTRON FLOW 5 from Arabidopsis thaliana (Mouse-ear cress).